The sequence spans 212 residues: Thymidylate kinase (212 aa).

7-14 (GIEGSGKS) contacts ATP.

It belongs to the thymidylate kinase family.

It carries out the reaction dTMP + ATP = dTDP + ADP. Functionally, phosphorylation of dTMP to form dTDP in both de novo and salvage pathways of dTTP synthesis. The polypeptide is Thymidylate kinase (Oleidesulfovibrio alaskensis (strain ATCC BAA-1058 / DSM 17464 / G20) (Desulfovibrio alaskensis)).